The sequence spans 797 residues: Speckle targeted PIP5K1A-regulated poly(A) polymerase (797 aa).

Residues 14 to 44 (FHCNLCHVNIPNRPSLEDHVKGKKHLHLLRL) form a Matrin-type zinc finger. An RRM domain is found at 54–126 (NSVFVSGFKA…LKLRVKPREK (73 aa)). Residue S205 participates in ATP binding. The Mg(2+) site is built by D216 and D218. UTP is bound by residues D216, D218, N319, R341, Y363, and H495. N319 contributes to the ATP binding site. The region spanning 421 to 495 (DLCTLLFGFF…NVLDPFELNH (75 aa)) is the PAP-associated domain. The tract at residues 544–787 (QSEAAASSQP…FLPKMAETIM (244 aa)) is KA1; binds the bulging loops of U6 snRNA but is dispensable for terminal uridylyltransferase activity. Positions 611 to 659 (EETQSLDKTDKSGSEMEVNNNRSLEDTNIQVKGEAGKKRPLSVEEGPST) are disordered. Residues 615–624 (SLDKTDKSGS) show a composition bias toward basic and acidic residues. Polar residues predominate over residues 627–640 (EVNNNRSLEDTNIQ).

It belongs to the DNA polymerase type-B-like family. As to quaternary structure, associates with the cleavage and polyadenylation specificity factor (CPSF) complex. It depends on Mg(2+) as a cofactor. The cofactor is Mn(2+).

It is found in the nucleus. The protein resides in the nucleolus. Its subcellular location is the nucleus speckle. It carries out the reaction RNA(n) + UTP = RNA(n)-3'-uridine ribonucleotide + diphosphate. It catalyses the reaction RNA(n) + ATP = RNA(n)-3'-adenine ribonucleotide + diphosphate. Functionally, poly(A) polymerase that creates the 3'-poly(A) tail of specific pre-mRNAs. In addition to polyadenylation, it is also required for the 3'-end cleavage of pre-mRNAs: binds to the 3'UTR of targeted pre-mRNAs and promotes the recruitment and assembly of the CPSF complex on the 3'UTR of pre-mRNAs. In addition to adenylyltransferase activity, also has uridylyltransferase activity. However, the ATP ratio is higher than UTP in cells, suggesting that it functions primarily as a poly(A) polymerase. This chain is Speckle targeted PIP5K1A-regulated poly(A) polymerase (tut1), found in Danio rerio (Zebrafish).